The following is a 100-amino-acid chain: Large ribosomal subunit protein uL23 (100 aa).

It belongs to the universal ribosomal protein uL23 family. Part of the 50S ribosomal subunit. Contacts protein L29, and trigger factor when it is bound to the ribosome.

One of the early assembly proteins it binds 23S rRNA. One of the proteins that surrounds the polypeptide exit tunnel on the outside of the ribosome. Forms the main docking site for trigger factor binding to the ribosome. The protein is Large ribosomal subunit protein uL23 of Rippkaea orientalis (strain PCC 8801 / RF-1) (Cyanothece sp. (strain PCC 8801)).